Consider the following 468-residue polypeptide: Protein phosphatase ppm-1.A (468 aa).

The tract at residues 1 to 23 is disordered; the sequence is MTISRADLQIASSAEPKTHGNLN. A PPM-type phosphatase domain is found at 106 to 381; the sequence is RYGMSSMQGW…DNMTMVVVCF (276 aa). Mn(2+) is bound by residues aspartate 145, glycine 146, aspartate 329, and aspartate 372.

This sequence belongs to the PP2C family. It depends on Mg(2+) as a cofactor. Mn(2+) is required as a cofactor. As to expression, expressed in neurons of the nerve ring and motor neurons of the ventral nerve cord.

It localises to the synapse. The enzyme catalyses O-phospho-L-seryl-[protein] + H2O = L-seryl-[protein] + phosphate. The catalysed reaction is O-phospho-L-threonyl-[protein] + H2O = L-threonyl-[protein] + phosphate. Functionally, probable phosphatase which regulates axon termination in ALM and PLM neurons, and synaptic branch extension and/or stabilization in PLM neurons. Plays a role in synapse formation in GABAergic DD motor neurons probably by dephosphorylating pmk-3 thereby negatively regulating a MAP kinase pathway that includes dlk-1, mkk-4 and pmk-3. This is Protein phosphatase ppm-1.A from Caenorhabditis elegans.